Consider the following 221-residue polypeptide: Ktr system potassium uptake protein C (221 aa).

Positions 2-118 (KKEFAVIGLG…LSKIGADHIV (117 aa)) constitute an RCK N-terminal domain. Residues Arg12, 32–34 (DID), 52–53 (DS), 74–76 (IGE), 99–101 (KAQ), His105, and Glu121 contribute to the NAD(+) site. The RCK C-terminal domain maps to 135-219 (NNVLDYLELS…ISRFEKRVLH (85 aa)).

The protein belongs to the KtrA potassium transport family. As to quaternary structure, homodimer, tetramer (dimer of homodimer) and octamer (tetramer of homodimer). Part of the KtrCD complex formed by an octameric catalytic ring of KtrC and a membrane associated dimer of KtrD forming a potassium channel.

The protein resides in the cell membrane. Functionally, catalytic subunit of the KtrCD potassium uptake transporter. The 2 major potassium transporter complexes KtrAB and KtrCD confer resistance to both suddenly imposed and prolonged osmotic stress. This is Ktr system potassium uptake protein C (ktrC) from Bacillus subtilis (strain 168).